The following is a 201-amino-acid chain: Translation initiation factor IF-3 (201 aa).

Positions 170–201 (TPKSASKKGHTPPKTQVEASKQANESAETEEE) are disordered. The segment covering 182–195 (PKTQVEASKQANES) has biased composition (polar residues).

This sequence belongs to the IF-3 family. In terms of assembly, monomer.

It localises to the cytoplasm. IF-3 binds to the 30S ribosomal subunit and shifts the equilibrium between 70S ribosomes and their 50S and 30S subunits in favor of the free subunits, thus enhancing the availability of 30S subunits on which protein synthesis initiation begins. This is Translation initiation factor IF-3 from Porphyromonas gingivalis (strain ATCC BAA-308 / W83).